The sequence spans 66 residues: Large ribosomal subunit protein bL33c (66 aa).

This sequence belongs to the bacterial ribosomal protein bL33 family.

It localises to the plastid. The protein localises to the chloroplast. This chain is Large ribosomal subunit protein bL33c, found in Lepidium virginicum (Virginia pepperweed).